We begin with the raw amino-acid sequence, 372 residues long: GTPase Obg (372 aa).

Positions M1–L159 constitute an Obg domain. Residues L128–G147 are disordered. The region spanning A160–A334 is the OBG-type G domain. GTP-binding positions include G166 to S173, F191 to A195, D213 to G216, N284 to D287, and S315 to L317. Mg(2+) contacts are provided by S173 and T193.

This sequence belongs to the TRAFAC class OBG-HflX-like GTPase superfamily. OBG GTPase family. As to quaternary structure, monomer. Mg(2+) serves as cofactor.

The protein resides in the cytoplasm. Its function is as follows. An essential GTPase which binds GTP, GDP and possibly (p)ppGpp with moderate affinity, with high nucleotide exchange rates and a fairly low GTP hydrolysis rate. Plays a role in control of the cell cycle, stress response, ribosome biogenesis and in those bacteria that undergo differentiation, in morphogenesis control. The chain is GTPase Obg from Burkholderia thailandensis (strain ATCC 700388 / DSM 13276 / CCUG 48851 / CIP 106301 / E264).